We begin with the raw amino-acid sequence, 128 residues long: Small ribosomal subunit protein uS10 (128 aa).

Belongs to the universal ribosomal protein uS10 family.

This chain is Small ribosomal subunit protein uS10 (RPS20), found in Oryza sativa subsp. japonica (Rice).